The following is a 160-amino-acid chain: Major pollen allergen Bet v 1-A (160 aa).

Residues Lys55, Tyr82, Tyr84, and Asn101 each coordinate brassinolide.

This sequence belongs to the BetVI family.

It is found in the cytoplasm. In terms of biological role, may be a general steroid carrier protein. This Betula pendula (European white birch) protein is Major pollen allergen Bet v 1-A (BETVIA).